We begin with the raw amino-acid sequence, 530 residues long: Hyccin 2 (530 aa).

Residues Thr30 and Thr306 each carry the phosphothreonine modification. A phosphoserine mark is found at Ser321 and Ser341. The tract at residues 328-404 (RREGAEGLNG…SNESPRDSVV (77 aa)) is disordered. Positions 353–373 (SGASLSSQPHGTKPPSSSQRG) are enriched in polar residues. A phosphoserine mark is found at Ser430, Ser442, Ser444, and Ser491. The disordered stretch occupies residues 502-530 (EGKELLSPGAPLTKQSRSPSFNMQLISQV). Positions 514-530 (TKQSRSPSFNMQLISQV) are enriched in polar residues.

Belongs to the Hyccin family. Component of a phosphatidylinositol 4-kinase (PI4K) complex, composed of PI4KA, EFR3 (EFR3A or EFR3B), TTC7 (TTC7A or TTC7B) and HYCC (HYCC1 or HYCC2). Expressed in the central nervous system. Expressed at much lower level in oligodendrocytes than in neurons.

It localises to the cytoplasm. It is found in the cytosol. The protein resides in the cell membrane. Its function is as follows. Component of a complex required to localize phosphatidylinositol 4-kinase (PI4K) to the plasma membrane. This Mus musculus (Mouse) protein is Hyccin 2 (Hycc2).